Consider the following 602-residue polypeptide: Transcription termination factor Rho (602 aa).

Disordered stretches follow at residues 1–35 (MTDTDLITAGESTDGKPSDAAATDPPDLNADEPAG) and 76–216 (ANGA…AEAE). The segment covering 85-96 (SAQEHDKGDRPP) has biased composition (basic and acidic residues). The segment covering 100–120 (APATQGEQTPTEQIDSQSQQV) has biased composition (polar residues). The segment covering 172-182 (GDQQASGGQQA) has biased composition (low complexity). A compositionally biased stretch (basic and acidic residues) spans 183 to 192 (RGDEDGEARQ). A compositionally biased stretch (basic residues) spans 193–206 (GRRGRRFRDRRRRG). The Rho RNA-BD domain occupies 223–301 (VQPVAGILDV…VRLDSINGGS (79 aa)). Residues 344–349 (GKGQRA), 356–361 (KAGKTT), and Arg387 contribute to the ATP site.

Belongs to the Rho family. As to quaternary structure, homohexamer. The homohexamer assembles into an open ring structure.

Functionally, facilitates transcription termination by a mechanism that involves Rho binding to the nascent RNA, activation of Rho's RNA-dependent ATPase activity, and release of the mRNA from the DNA template. This Mycobacterium bovis (strain ATCC BAA-935 / AF2122/97) protein is Transcription termination factor Rho.